The following is a 1030-amino-acid chain: Kinesin-related protein 6 (1030 aa).

The SAM domain maps to 3 to 66; the sequence is FENDQLYNWL…FHLLQQLKKQ (64 aa). 2 disordered regions span residues 66–164 and 178–308; these read QTPP…SDFM and RQQY…EDDD. A compositionally biased stretch (polar residues) spans 68 to 80; that stretch reads PPISNTSSPVINS. Composition is skewed to low complexity over residues 81–117, 125–164, 181–197, and 225–238; these read NNNNNNNNNNNNNNNNNNNNNNNNNNNNNNNNNNNNN, TSTSSLLSNNNLMSTQTQQSSSSSSSSSLSSKSNSNSDFM, YAKQQQQQQSTQTKYQS, and QQQQQQQQQQQQQD. Acidic residues predominate over residues 239 to 290; sequence FEFEEEEEEEDQQQQYDEEEEEEEEYEEDFYKEDLGEIDDGNVLDISDDEPD. The Kinesin motor domain maps to 453 to 775; the sequence is RIRVCVRKRP…LRYADRVKEL (323 aa). Residue 543–550 participates in ATP binding; that stretch reads GQTGSGKT. Low complexity-rich tracts occupy residues 826–839, 849–906, and 981–1009; these read INSQQPIIQQTSQP, QQQE…QTQP, and PIQQQQQQQQPIQQQQQSTPQPSQLQTPQ. 2 disordered regions span residues 826-915 and 981-1030; these read INSQ…KIDF and PIQQ…SSRN.

Belongs to the TRAFAC class myosin-kinesin ATPase superfamily. Kinesin family.

Its subcellular location is the cytoplasm. The protein localises to the cytoskeleton. Microtubule-associated force-producing protein that plays a role in organelle transport. Its motor activity is directed toward the microtubule's plus end. This is Kinesin-related protein 6 (kif6) from Dictyostelium discoideum (Social amoeba).